A 387-amino-acid polypeptide reads, in one-letter code: Patatin group D-3 (387 aa).

The first 23 residues, 1 to 23, serve as a signal peptide directing secretion; sequence MATTKSFLILIVMILATTSSTFA. Residues 32 to 230 form the PNPLA domain; it reads LSIDGGGIKG…TVADPALLSI (199 aa). The GXGXXG signature appears at 36-41; it reads GGGIKG. A GXSXG motif is present at residues 75 to 79; it reads GTSTG. Serine 77 serves as the catalytic Nucleophile. N-linked (GlcNAc...) asparagine glycosylation occurs at asparagine 115. Catalysis depends on aspartate 216, which acts as the Proton acceptor. A DGA/G motif is present at residues 216 to 218; that stretch reads DGA. A coiled-coil region spans residues 361 to 385; it reads ETYEEALKRFAKLLSDRKKLRANKA.

Belongs to the patatin family. In terms of tissue distribution, tuber.

It is found in the vacuole. Functionally, probable lipolytic acyl hydrolase (LAH), an activity which is thought to be involved in the response of tubers to pathogens. The polypeptide is Patatin group D-3 (Solanum tuberosum (Potato)).